The primary structure comprises 721 residues: BBSome complex member BBS2 (721 aa).

Residues 325 to 369 are a coiled coil; the sequence is KGNLLDTSVEQGLIRELSQKKQNLLLELRNYEENTKAELSSPLNE.

As to quaternary structure, part of BBSome complex, that contains BBS1, BBS2, BBS4, BBS5, BBS7, BBS8/TTC8, BBS9 and BBIP10. Interacts (via C-terminus) with BBS7. Interacts (via coiled coil domain) with MKKS. Interacts with CCDC28B. Interacts with DLEC1.

It localises to the cell projection. It is found in the cilium membrane. Its subcellular location is the cytoplasm. The protein resides in the cytoskeleton. The protein localises to the microtubule organizing center. It localises to the centrosome. It is found in the centriolar satellite. In terms of biological role, the BBSome complex is thought to function as a coat complex required for sorting of specific membrane proteins to the primary cilia. The BBSome complex is required for ciliogenesis but is dispensable for centriolar satellite function. This ciliogenic function is mediated in part by the Rab8 GDP/GTP exchange factor, which localizes to the basal body and contacts the BBSome. Rab8(GTP) enters the primary cilium and promotes extension of the ciliary membrane. Firstly the BBSome associates with the ciliary membrane and binds to RAB3IP/Rabin8, the guanosyl exchange factor (GEF) for Rab8 and then the Rab8-GTP localizes to the cilium and promotes docking and fusion of carrier vesicles to the base of the ciliary membrane. The BBSome complex, together with the LTZL1, controls SMO ciliary trafficking and contributes to the sonic hedgehog (SHH) pathway regulation. Required for proper BBSome complex assembly and its ciliary localization. The sequence is that of BBSome complex member BBS2 (Bbs2) from Rattus norvegicus (Rat).